Reading from the N-terminus, the 205-residue chain is ATP phosphoribosyltransferase (205 aa).

Belongs to the ATP phosphoribosyltransferase family. Short subfamily. In terms of assembly, heteromultimer composed of HisG and HisZ subunits.

It localises to the cytoplasm. It carries out the reaction 1-(5-phospho-beta-D-ribosyl)-ATP + diphosphate = 5-phospho-alpha-D-ribose 1-diphosphate + ATP. The protein operates within amino-acid biosynthesis; L-histidine biosynthesis; L-histidine from 5-phospho-alpha-D-ribose 1-diphosphate: step 1/9. In terms of biological role, catalyzes the condensation of ATP and 5-phosphoribose 1-diphosphate to form N'-(5'-phosphoribosyl)-ATP (PR-ATP). Has a crucial role in the pathway because the rate of histidine biosynthesis seems to be controlled primarily by regulation of HisG enzymatic activity. This chain is ATP phosphoribosyltransferase, found in Ruthia magnifica subsp. Calyptogena magnifica.